Here is a 46-residue protein sequence, read N- to C-terminus: MAQNEEKTPKSQKIQDRIIMAMIWVVAALVIALVVGTALNYINIFK.

A helical membrane pass occupies residues 20–42 (MAMIWVVAALVIALVVGTALNYI).

It localises to the membrane. This is an uncharacterized protein from Bacillus subtilis (strain 168).